A 160-amino-acid chain; its full sequence is Globin-like protein (160 aa).

Residues S2 to K152 form the Globin domain. Residue H101 coordinates heme.

Belongs to the globin family.

It is found in the cytoplasm. May be a globin and may play a role in oxygen transport. The protein is Globin-like protein (glb-1) of Caenorhabditis briggsae.